The following is a 167-amino-acid chain: UPF0262 protein Nwi_0248 (167 aa).

The protein belongs to the UPF0262 family.

The polypeptide is UPF0262 protein Nwi_0248 (Nitrobacter winogradskyi (strain ATCC 25391 / DSM 10237 / CIP 104748 / NCIMB 11846 / Nb-255)).